We begin with the raw amino-acid sequence, 230 residues long: Small ribosomal subunit protein uS3 (230 aa).

Residues 39-107 form the KH type-2 domain; that stretch reads VRKFLVEKLQ…PAQINIAEIR (69 aa).

It belongs to the universal ribosomal protein uS3 family. As to quaternary structure, part of the 30S ribosomal subunit. Forms a tight complex with proteins S10 and S14.

Its function is as follows. Binds the lower part of the 30S subunit head. Binds mRNA in the 70S ribosome, positioning it for translation. This Shewanella putrefaciens (strain CN-32 / ATCC BAA-453) protein is Small ribosomal subunit protein uS3.